The following is a 118-amino-acid chain: Large ribosomal subunit protein bL20 (118 aa).

The protein belongs to the bacterial ribosomal protein bL20 family.

In terms of biological role, binds directly to 23S ribosomal RNA and is necessary for the in vitro assembly process of the 50S ribosomal subunit. It is not involved in the protein synthesizing functions of that subunit. The polypeptide is Large ribosomal subunit protein bL20 (Elusimicrobium minutum (strain Pei191)).